The chain runs to 669 residues: Filensin (669 aa).

The head stretch occupies residues 1–33 (MYRRSYVFQARQERYERAQPAGPAAQPGGTAPG). Ser5 carries the post-translational modification Phosphoserine. One can recognise an IF rod domain in the interval 33 to 318 (GLAALQALGE…RIIEIEGSRL (286 aa)). A coil 1A region spans residues 34-68 (LAALQALGERVAVQVQRARALQQRHAGLRRQLDAF). Ala35 is subject to N-acetylalanine. Positions 69–77 (QRLGEQPGP) are linker 1. Positions 78-177 (EDALARHVEA…RYKKNLLEIQ (100 aa)) are coil 1B. The segment at 178–194 (TYITVLQQIVQTAPQVS) is linker 12. Residues 195–318 (LVTGMRESGL…RIIEIEGSRL (124 aa)) are coil 2. Residues 319 to 669 (SSVFIETPIS…GEKSLPDTRA (351 aa)) are tail. Position 339 is a phosphoserine (Ser339). Disordered regions lie at residues 380–435 (VEET…GGQI), 449–468 (RVSG…FTKG), and 505–618 (HHDG…KALS). Residues 408-417 (SQPGAGGGHG) are compositionally biased toward gly residues. Residue Gly432 is the site of N-myristoyl glycine attachment. Ser513 is modified (phosphoserine). Basic and acidic residues predominate over residues 545–570 (NGLRAKEPKDLEEKDDDGKKEAEGSR). Over residues 583 to 593 (PSTSHSQTSGS) the composition is skewed to polar residues. Thr585 is subject to Phosphothreonine.

It belongs to the intermediate filament family. In terms of assembly, part of a complex required for lens intermediate filament formation composed of BFSP1, BFSP2 and CRYAA. Identified in a complex that contains VIM, EZR, AHNAK, BFSP1, BFSP2, ANK2, PLEC, PRX and spectrin. Found in a complex composed of PPL (via C-terminal linker domain), BFSP1 and BFSP2 in the retinal lens. Within the complex interacts with BFSP2. Interacts (via C-terminus) with MIP (via C-terminus) in aged lens fiber cells. Post-translationally, proteolytically cleaved during lens cell fiber differentiation with increased fragmentation as fiber cell age increases. In terms of processing, myristoylated at Gly-432 following proteolytic cleavage at Asp-431. Acetylated at Ala-35 following proteolytic cleavage at Leu-34. As to expression, detected in eye lens fiber cells (at protein level). Expressed in retinal lens epithelial cells (at protein level).

It localises to the cell membrane. It is found in the cytoplasm. The protein localises to the cytoskeleton. The protein resides in the cell cortex. Required for the correct formation of lens intermediate filaments as part of a complex composed of BFSP1, BFSP2 and CRYAA. Involved in altering the calcium regulation of MIP water permeability. The sequence is that of Filensin (Bfsp1) from Mus musculus (Mouse).